The chain runs to 132 residues: Small ribosomal subunit protein uS8 (132 aa).

This sequence belongs to the universal ribosomal protein uS8 family. In terms of assembly, part of the 30S ribosomal subunit. Contacts proteins S5 and S12.

One of the primary rRNA binding proteins, it binds directly to 16S rRNA central domain where it helps coordinate assembly of the platform of the 30S subunit. The chain is Small ribosomal subunit protein uS8 from Rickettsia rickettsii (strain Sheila Smith).